The chain runs to 788 residues: ATP-dependent 6-phosphofructokinase, platelet type (788 aa).

An N-acetylmethionine modification is found at methionine 1. An N-terminal catalytic PFK domain 1 region spans residues 1 to 399; that stretch reads MSDQDSSTSS…NLNTYKRLAI (399 aa). A phosphoserine mark is found at serine 2, serine 6, serine 12, and serine 21. ATP is bound by residues glycine 34, 97–98, and 127–130; these read RC and GDGS. Position 128 (aspartate 128) interacts with Mg(2+). A Phosphoserine modification is found at serine 142. Substrate-binding positions include 173–175, arginine 210, 217–219, glutamate 273, arginine 301, and 307–310; these read SID, MGR, and HVQR. Residue aspartate 175 is the Proton acceptor of the active site. Serine 386 is modified (phosphoserine). Lysine 395 carries the N6-acetyllysine modification. The interval 400–411 is interdomain linker; that stretch reads KEPDDKIPKSNC. A C-terminal regulatory PFK domain 2 region spans residues 412 to 788; it reads NVAIINVGAP…VHNHGELSAI (377 aa). Residue arginine 481 participates in beta-D-fructose 2,6-bisphosphate binding. Lysine 486 is subject to N6-acetyllysine. Beta-D-fructose 2,6-bisphosphate-binding positions include 538–542, arginine 576, 583–585, and glutamate 639; these read TVSNN and MGG. O-linked (GlcNAc) serine glycosylation occurs at serine 540. Position 651 is a phosphotyrosine (tyrosine 651). Residues arginine 665 and 671–674 each bind beta-D-fructose 2,6-bisphosphate; that span reads HMQQ. An N6-acetyllysine modification is found at lysine 688. Arginine 744 is a binding site for beta-D-fructose 2,6-bisphosphate.

The protein belongs to the phosphofructokinase type A (PFKA) family. ATP-dependent PFK group I subfamily. Eukaryotic two domain clade 'E' sub-subfamily. As to quaternary structure, homo- and heterotetramers. Phosphofructokinase (PFK) enzyme functions as a tetramer composed of different combinations of 3 types of subunits, called PFKM (M), PFKL (L) and PFKP (P). The composition of the PFK tetramer differs according to the tissue type it is present in. The kinetic and regulatory properties of the tetrameric enzyme are dependent on the subunit composition, hence can vary across tissues. Interacts with ATG4B; promoting phosphorylation of ATG4B. Mg(2+) serves as cofactor. GlcNAcylation decreases enzyme activity. In terms of processing, phosphorylation at Ser-386 promotes interaction with ATG4B. Expressed at high level in neuroendocrine tissues.

The protein resides in the cytoplasm. It catalyses the reaction beta-D-fructose 6-phosphate + ATP = beta-D-fructose 1,6-bisphosphate + ADP + H(+). The protein operates within carbohydrate degradation; glycolysis; D-glyceraldehyde 3-phosphate and glycerone phosphate from D-glucose: step 3/4. With respect to regulation, allosterically activated by ADP, AMP, or fructose 2,6-bisphosphate, and allosterically inhibited by ATP or citrate. Functionally, catalyzes the phosphorylation of D-fructose 6-phosphate to fructose 1,6-bisphosphate by ATP, the first committing step of glycolysis. The chain is ATP-dependent 6-phosphofructokinase, platelet type (Pfkp) from Rattus norvegicus (Rat).